Reading from the N-terminus, the 77-residue chain is uncharacterized protein (77 aa).

This is an uncharacterized protein from Plasmodium falciparum (isolate fcm17 / Senegal).